A 306-amino-acid chain; its full sequence is Ornithine carbamoyltransferase (306 aa).

Carbamoyl phosphate contacts are provided by residues 54 to 57 (STRT), Q81, R105, and 132 to 135 (HPLQ). L-ornithine is bound by residues N162, D226, and 230–231 (SM). Carbamoyl phosphate is bound by residues 266–267 (CL) and R294.

It belongs to the aspartate/ornithine carbamoyltransferase superfamily. OTCase family.

It localises to the cytoplasm. It catalyses the reaction carbamoyl phosphate + L-ornithine = L-citrulline + phosphate + H(+). It participates in amino-acid biosynthesis; L-arginine biosynthesis; L-arginine from L-ornithine and carbamoyl phosphate: step 1/3. Reversibly catalyzes the transfer of the carbamoyl group from carbamoyl phosphate (CP) to the N(epsilon) atom of ornithine (ORN) to produce L-citrulline. This Sulfurisphaera tokodaii (strain DSM 16993 / JCM 10545 / NBRC 100140 / 7) (Sulfolobus tokodaii) protein is Ornithine carbamoyltransferase.